The chain runs to 157 residues: Crossover junction endodeoxyribonuclease RuvC (157 aa).

Catalysis depends on residues Asp-7, Glu-66, and Asp-139. The Mg(2+) site is built by Asp-7, Glu-66, and Asp-139.

It belongs to the RuvC family. Homodimer which binds Holliday junction (HJ) DNA. The HJ becomes 2-fold symmetrical on binding to RuvC with unstacked arms; it has a different conformation from HJ DNA in complex with RuvA. In the full resolvosome a probable DNA-RuvA(4)-RuvB(12)-RuvC(2) complex forms which resolves the HJ. The cofactor is Mg(2+).

Its subcellular location is the cytoplasm. The enzyme catalyses Endonucleolytic cleavage at a junction such as a reciprocal single-stranded crossover between two homologous DNA duplexes (Holliday junction).. Functionally, the RuvA-RuvB-RuvC complex processes Holliday junction (HJ) DNA during genetic recombination and DNA repair. Endonuclease that resolves HJ intermediates. Cleaves cruciform DNA by making single-stranded nicks across the HJ at symmetrical positions within the homologous arms, yielding a 5'-phosphate and a 3'-hydroxyl group; requires a central core of homology in the junction. The consensus cleavage sequence is 5'-(A/T)TT(C/G)-3'. Cleavage occurs on the 3'-side of the TT dinucleotide at the point of strand exchange. HJ branch migration catalyzed by RuvA-RuvB allows RuvC to scan DNA until it finds its consensus sequence, where it cleaves and resolves the cruciform DNA. The polypeptide is Crossover junction endodeoxyribonuclease RuvC (Helicobacter acinonychis (strain Sheeba)).